Consider the following 500-residue polypeptide: MSDHNATPAAQDENHIIAERREKLAQWRQAGRAFPNDFSRENTAGKLDEVYGDKEPEALEASPVEVRVAGRVMLKRVMGKASFITIQDLSGRIQLYVQRDGVGEDVYADFKHWDIGDIVGCVGTLFKTKTGELTVKASEIRLLTKSLRPLPDKFHGLTDVEQKYRQRYLDLIMSEQTRFTFVARSRMVQSIRNYMINHGFLEVETPMMHPIPGGAAAKPFVTHHNALDMELFLRIAPELYLKRLVVGGLEKVFEVNRNFRNEGLSPRHNPEFTMMEFYEAYADYRSLMNFTEGLIRQAAREALGAESFVYQGRELDLSKPFHRLTIVQAIRKYHPGFSEAQLADAEWVKEKIQAFGEKVKPGGLGSLQLQLFEACAEAELWEPTFIIDYPVEVSPLARASDSNPEITERFELFIVGREIANGFSELNDPEDQAARFLAQAQAKEAGDEEAMYYDADYIRALEFGLPPTGGCGIGIDRLVMLLTDSASIRDVILFPQMRPE.

Mg(2+) contacts are provided by Glu411 and Glu418.

It belongs to the class-II aminoacyl-tRNA synthetase family. Homodimer. It depends on Mg(2+) as a cofactor.

It localises to the cytoplasm. The enzyme catalyses tRNA(Lys) + L-lysine + ATP = L-lysyl-tRNA(Lys) + AMP + diphosphate. In Azoarcus sp. (strain BH72), this protein is Lysine--tRNA ligase.